The chain runs to 90 residues: Probable Fe(2+)-trafficking protein (90 aa).

It belongs to the Fe(2+)-trafficking protein family.

Its function is as follows. Could be a mediator in iron transactions between iron acquisition and iron-requiring processes, such as synthesis and/or repair of Fe-S clusters in biosynthetic enzymes. In Pseudomonas fluorescens (strain Pf0-1), this protein is Probable Fe(2+)-trafficking protein.